The following is a 500-amino-acid chain: Pyridine nucleotide-disulfide oxidoreductase domain-containing protein 1 (500 aa).

M1 bears the N-acetylmethionine mark.

It belongs to the class-I pyridine nucleotide-disulfide oxidoreductase family. PYROXD1 subfamily. FAD serves as cofactor.

The protein resides in the nucleus. Its subcellular location is the cytoplasm. The protein localises to the myofibril. It is found in the sarcomere. In terms of biological role, probable FAD-dependent oxidoreductase; involved in the cellular oxidative stress response. Required for normal sarcomere structure and muscle fiber integrity. This is Pyridine nucleotide-disulfide oxidoreductase domain-containing protein 1 (PYROXD1) from Pongo abelii (Sumatran orangutan).